The chain runs to 429 residues: Tubby-like F-box protein 5 (429 aa).

Residues 53-108 enclose the F-box domain; sequence TRWANLPAALLRDVMKKLDESESTWPARKQVVACAGVCKTWRLMCKDIVKSPEFSG. The tract at residues 360–385 is disordered; that stretch reads QPGSGSDGGALATRPSLSPQQPEQSN. The span at 374–383 shows a compositional bias: polar residues; the sequence is PSLSPQQPEQ.

The protein belongs to the TUB family. In terms of tissue distribution, mostly expressed in roots, flowers and siliques.

This chain is Tubby-like F-box protein 5, found in Arabidopsis thaliana (Mouse-ear cress).